The following is a 429-amino-acid chain: Glutamate-1-semialdehyde 2,1-aminomutase (429 aa).

Position 265 is an N6-(pyridoxal phosphate)lysine (Lys-265).

Belongs to the class-III pyridoxal-phosphate-dependent aminotransferase family. HemL subfamily. As to quaternary structure, homodimer. It depends on pyridoxal 5'-phosphate as a cofactor.

It is found in the cytoplasm. It catalyses the reaction (S)-4-amino-5-oxopentanoate = 5-aminolevulinate. The protein operates within porphyrin-containing compound metabolism; protoporphyrin-IX biosynthesis; 5-aminolevulinate from L-glutamyl-tRNA(Glu): step 2/2. The protein is Glutamate-1-semialdehyde 2,1-aminomutase of Legionella pneumophila subsp. pneumophila (strain Philadelphia 1 / ATCC 33152 / DSM 7513).